Here is a 358-residue protein sequence, read N- to C-terminus: Probable BOI-related E3 ubiquitin-protein ligase 2 (358 aa).

The stretch at 171 to 234 (KYEIEEKRKR…NQIWRDLAQT (64 aa)) forms a coiled coil. A WRD domain region spans residues 214 to 250 (LEERVKSLSIENQIWRDLAQTNEATANHLRTNLEHVL). The segment at 310–345 (CRNCGEEESCVLLLPCRHLCLCGVCGSSVHTCPICT) adopts an RING-type zinc-finger fold.

As to quaternary structure, interacts with the DELLA proteins GAI, RGA, RGL1, RGL2 and RGL3.

It catalyses the reaction S-ubiquitinyl-[E2 ubiquitin-conjugating enzyme]-L-cysteine + [acceptor protein]-L-lysine = [E2 ubiquitin-conjugating enzyme]-L-cysteine + N(6)-ubiquitinyl-[acceptor protein]-L-lysine.. It functions in the pathway protein degradation; proteasomal ubiquitin-dependent pathway. In terms of biological role, probable E3 ubiquitin-protein ligase. Has no effect on the stability of the DELLA proteins. This is Probable BOI-related E3 ubiquitin-protein ligase 2 (BRG2) from Arabidopsis thaliana (Mouse-ear cress).